The sequence spans 637 residues: Chaperone protein HtpG (637 aa).

The segment at 1 to 345 (MSQQETHGFQ…SNDLPLNVSR (345 aa)) is a; substrate-binding. The b stretch occupies residues 346–562 (EILQDNQVTT…EGEMSTQMIK (217 aa)). Residues 563-637 (LMQAAGQAVP…MNQMLLANAK (75 aa)) are c.

This sequence belongs to the heat shock protein 90 family. Homodimer.

Its subcellular location is the cytoplasm. Functionally, molecular chaperone. Has ATPase activity. The chain is Chaperone protein HtpG from Shewanella denitrificans (strain OS217 / ATCC BAA-1090 / DSM 15013).